The primary structure comprises 1978 residues: MSMDIPETVSLRKFRDFSARQKQELYETLLELAESIDELPKKSLRKTLELTLAVLEYKGEQVQQLQESAAGGLSSDRRLQDENEKLKRMLQKLEDERDGLKSKAKELGEEIRQLELRLQEAAQQAEISDKDSSDPLSELDKQEQLLQNIDSKNKHIKRLLKEIETLQNQNIAQSKTIVLHERELQTIKANLVQLSQDITKVEQERKSLKQKEQQQALEITRLEGNLTFLEVEREKQEVEMRQFLDKYEAKSLGWRQALDDRDKEVERLKKQLEGKSISSGQTNSSNSQSQQEEEHAKLRQLLESREQRIEKLEEKIKSMAEEMVSSTRAMNQLCQEKERAHDPEQPRACCQMIEERLREATARCQQLSEMLEAAEQDNVLKSQQALHAISALEAYKRDEDGLIPALRRCSGLEQKVAARDKQLRAYIQELNSLHEVVQENELLRRKLHIPDDVVIMAKNVHSKQRNKDKQIERLTLKLRTSEELRLQLKLEKSELRRKLLELQQDSPQTLNESLQAPSEVGEVPHSVHLENSPRRGQGDGAASSEMQNRYDEVLAENETLRSGMYEILEKLREYDATSEHITIDSDLLRRLIEALPGGTTTPQRLQGQLLELKAREEALRQLLEQQNYSDSETGELSSVHSLCEVPEIAEEHPVEEDAVLNTATRPSSPTEATMGLRRPTVPDPEEKPTNEALAELSILRKHYDELRLHMSADGSDLMNRNQELHDQMIALELQLEQQRNSYSYMRRDYDQLLTETRKQELRFIDDKASLARQLEHSKSELCEAREELEQVNRRNLYTAEEQQKLEHRNAILSMQLGQAMEQLLGELKPTEICAEYGIIRENYQLDYITAQDFEEQQQELLTWRSKQAELQRETKQLEGLLHVANEQIHSQQRLLNEITDNHINLRHLVADLQSSSDEKLMLAKVQRDLDSVKAECSRLETEREKLQLKADCLQTQLEASELSLKQTQQDFQQERTNSDIKHKFLQHSLFMLKDKYAKFTPLVFLTNFVFAYQKFQRRLEEEQVQQRHRDHTALIDEVTAVVQAKIGLNEESSQQLVKLIKSETQTRLLEQRCEILQAKQEELVRELGELRMSQATDTEHWSTIQALFGEGEPRSQLKVDAETNTDAVAPNLAMRRAVQLIDRESSPIGSPLRKHPHLDTATQTLEAQVEFSETAVQTNGILSQQNQAVQTADAVEDNRRDSRAELQKMQETLQEANQRIEILGKQLEASRSESRESASPQGGVVEKTILSFHTLLLEKDQSIQKYQDLLQTERDQSQQALSKQVAENESLRATVNNLNFNIKTKDAEIQGLKEKLRQKPEVPVERNPSTDSRSSSSSDSSVNELTDEKIEELFESSSVERPPQEELEVPVEAGPENIVTEEPEGEEEKQDTEELKEVPTLHKQIKDLKDKLEYSERSLKTREEEVDILKEKLKLCQEREKSVESTVNPELDQLRIFLDEKDKHIKDLMDTLKNFHDDQQRYIKDTSNFSEDQIAKLAADLNRTEATNKIYHTQMEALRRQLANVTQREKQARDLSQSLRQQLLKRPVVSIKTELNARVKNENQLKRIQQLELDLDEARGQLQRQQTLLEAKRTRSANEVQLWEKQKRYQQQAEKTKARLEETELALEKTRALLQAARTTIARLEKDKQILESKLGRNGPPSNSSGGNNLKCCRTPSCPNLQHVGVSKFAPSPSESPETYTGPSSECSSPAHHHTQIFDQSQLDLIEALKSRIELQQRKIIAMELEGRGSNALTTELEKLQERCQAIEAQNIRLEARNLQLQLDSDLLRQGDSSDRLQKRIKHLEDYIMALKEEMARNESRRELGSGLKVSTNQGQSAEQTILSLRNLVEKLRSENKFLKDGRRSTESRSSMDSTPAEAARLQQQHAEALEKISALQQELQKRTTKCSQCGGRSKDAANEELKFIKEQLVKKTQLLQKAKVLLTRAAAKEKVLREQLALWKRKCSELQNVPVIDEISE.

Residues 1–650 (MSMDIPETVS…SLCEVPEIAE (650 aa)) are necessary and sufficient for function in ciliogenesis, transition zone (TZ) assembly, and recruitment of DZP1 and Mks1 to the TZ. Also required for subcellular localization to the cilium basal body. Coiled-coil stretches lie at residues 76–384 (DRRL…KSQQ) and 471–505 (IERLTLKLRTSEELRLQLKLEKSELRRKLLELQQD). The interval 271-296 (QLEGKSISSGQTNSSNSQSQQEEEHA) is disordered. Residues 276–290 (SISSGQTNSSNSQSQ) are compositionally biased toward low complexity. The segment at 663 to 688 (ATRPSSPTEATMGLRRPTVPDPEEKP) is disordered. Coiled coils occupy residues 853 to 887 (FEEQQQELLTWRSKQAELQRETKQLEGLLHVANEQ), 922 to 970 (LAKV…TQQD), and 1192 to 1233 (ADAV…SRSE). Over residues 1313–1324 (KEKLRQKPEVPV) the composition is skewed to basic and acidic residues. A disordered region spans residues 1313-1397 (KEKLRQKPEV…EKQDTEELKE (85 aa)). The segment covering 1329-1341 (STDSRSSSSSDSS) has biased composition (low complexity). The span at 1379–1391 (VTEEPEGEEEKQD) shows a compositional bias: acidic residues. Coiled-coil stretches lie at residues 1405 to 1439 (IKDLKDKLEYSERSLKTREEEVDILKEKLKLCQER) and 1501 to 1654 (LNRT…LESK). 2 disordered regions span residues 1684–1714 (VGVSKFAPSPSESPETYTGPSSECSSPAHHH) and 1859–1884 (LKDGRRSTESRSSMDSTPAEAARLQQ). Positions 1693–1708 (PSESPETYTGPSSECS) are enriched in polar residues. Residues 1726–1935 (IEALKSRIEL…KEQLVKKTQL (210 aa)) adopt a coiled-coil conformation.

In terms of assembly, interacts (via N-terminus) with DZIP1. Expressed in sensory neurons type I and in germ cells (at protein level).

The protein resides in the cytoplasm. Its subcellular location is the cytoskeleton. It localises to the cilium basal body. The protein localises to the microtubule organizing center. It is found in the centrosome. The protein resides in the centriole. In terms of biological role, essential for ciliogenesis in sensory neurons and spermatocytes. During neuron and spermatocyte ciliogenesis, essential for initiating transition zone (TZ) assembly and is required for the formation of diverse connections between microtubules and between microtubules and the membrane. Regulates TZ assembly by recruiting DZIP1 to the plasma membrane where it promotes early ciliary membrane formation resulting in the initiation of TZ assembly. This chain is Centrosomal protein Cep290, found in Drosophila melanogaster (Fruit fly).